We begin with the raw amino-acid sequence, 441 residues long: Ribosomal protein uS12 methylthiotransferase RimO (441 aa).

An MTTase N-terminal domain is found at 7–117 (PKISFVSLGC…VLEAVHRASP (111 aa)). [4Fe-4S] cluster is bound by residues cysteine 16, cysteine 52, cysteine 81, cysteine 148, cysteine 152, and cysteine 155. The Radical SAM core domain maps to 134-371 (LTPRHYAYLK…MARQQKISAR (238 aa)). The TRAM domain occupies 374–440 (KRKVGTRQQI…EYDLHGTVAG (67 aa)).

The protein belongs to the methylthiotransferase family. RimO subfamily. The cofactor is [4Fe-4S] cluster.

Its subcellular location is the cytoplasm. It catalyses the reaction L-aspartate(89)-[ribosomal protein uS12]-hydrogen + (sulfur carrier)-SH + AH2 + 2 S-adenosyl-L-methionine = 3-methylsulfanyl-L-aspartate(89)-[ribosomal protein uS12]-hydrogen + (sulfur carrier)-H + 5'-deoxyadenosine + L-methionine + A + S-adenosyl-L-homocysteine + 2 H(+). In terms of biological role, catalyzes the methylthiolation of an aspartic acid residue of ribosomal protein uS12. This Bradyrhizobium sp. (strain BTAi1 / ATCC BAA-1182) protein is Ribosomal protein uS12 methylthiotransferase RimO.